The chain runs to 287 residues: uncharacterized protein (287 aa).

In terms of domain architecture, ATP-grasp spans 115–287 (SLLSKETIKS…KKFLKKKLIS (173 aa)).

This is an uncharacterized protein from Mycoplasma genitalium (strain ATCC 33530 / DSM 19775 / NCTC 10195 / G37) (Mycoplasmoides genitalium).